Consider the following 468-residue polypeptide: Cysteine--tRNA ligase (468 aa).

Cysteine 33 provides a ligand contact to Zn(2+). A 'HIGH' region motif is present at residues 35 to 45 (ATVQGLPHIGH). Zn(2+) is bound by residues cysteine 211, histidine 236, and glutamate 240. A 'KMSKS' region motif is present at residues 267-271 (KMSKS). ATP is bound at residue lysine 270.

Belongs to the class-I aminoacyl-tRNA synthetase family. In terms of assembly, monomer. Zn(2+) is required as a cofactor.

It is found in the cytoplasm. It carries out the reaction tRNA(Cys) + L-cysteine + ATP = L-cysteinyl-tRNA(Cys) + AMP + diphosphate. The chain is Cysteine--tRNA ligase from Mycobacterium ulcerans (strain Agy99).